Reading from the N-terminus, the 490-residue chain is Coagulation factor X (490 aa).

Residues 1–20 form the signal peptide; sequence MANPLHLVLLGAALAGLLLS. Positions 21 to 40 are excised as a propeptide; it reads GSSVFISRRAANDVLARTRR. One can recognise a Gla domain in the interval 41–85; that stretch reads ANSFLEELKKGNLERECMEENCSYEEALEVFEDREKTNEFWNKYV. 6 positions are modified to 4-carboxyglutamate: E46, E47, E54, E56, E59, and E60. C57 and C62 are oxidised to a cystine. Residue N61 is glycosylated (N-linked (GlcNAc...) asparagine). 4-carboxyglutamate occurs at positions 65, 66, 69, 72, 75, and 79. The EGF-like 1; calcium-binding domain maps to 86–122; that stretch reads DGDQCESNPCQNQGTCKDGLGMYTCSCVEGYEGQDCE. Cystine bridges form between C90-C101, C95-C110, C112-C121, C129-C140, C136-C149, C151-C164, C172-C340, C239-C244, C259-C275, C388-C402, and C413-C441. (3R)-3-hydroxyaspartate is present on D103. Residues 125–165 enclose the EGF-like 2 domain; it reads TRKLCSLDNGGCDQFCKEEENSVLCSCASGYTLGDNGKSCI. Residues 183–230 form a disordered region; that stretch reads SPATNSSEGPPEAPGPEQQDDGNLTATENPFNLLDSPEPPPEDDSSSL. Positions 184-232 are cleaved as a propeptide — activation peptide; that stretch reads PATNSSEGPPEAPGPEQQDDGNLTATENPFNLLDSPEPPPEDDSSSLVR. N-linked (GlcNAc...) asparagine glycans are attached at residues N187 and N205. Over residues 203 to 212 the composition is skewed to polar residues; sequence DGNLTATENP. The Peptidase S1 domain maps to 233 to 465; sequence IVGGQDCRDG…FLKWIEKSMR (233 aa). Active-site charge relay system residues include H274 and D320. Catalysis depends on S417, which acts as the Charge relay system.

The protein belongs to the peptidase S1 family. In terms of assembly, the two chains are formed from a single-chain precursor by the excision of two Arg residues and are held together by 1 or more disulfide bonds. Forms a heterodimer with SERPINA5. The vitamin K-dependent, enzymatic carboxylation of some glutamate residues allows the modified protein to bind calcium. Post-translationally, N- and O-glycosylated. In terms of processing, proteolytically cleaved and activated by cathepsin CTSG. The activation peptide is cleaved by factor IXa (in the intrinsic pathway), or by factor VIIa (in the extrinsic pathway). The iron and 2-oxoglutarate dependent 3-hydroxylation of aspartate and asparagine is (R) stereospecific within EGF domains.

Its subcellular location is the secreted. It catalyses the reaction Selective cleavage of Arg-|-Thr and then Arg-|-Ile bonds in prothrombin to form thrombin.. Inhibited by SERPINA5. Functionally, factor Xa is a vitamin K-dependent glycoprotein that converts prothrombin to thrombin in the presence of factor Va, calcium and phospholipid during blood clotting. Factor Xa activates pro-inflammatory signaling pathways in a protease-activated receptor (PAR)-dependent manner. The polypeptide is Coagulation factor X (F10) (Oryctolagus cuniculus (Rabbit)).